The following is a 657-amino-acid chain: MTQLAIGKPAPLGAHYDGQGVNFTLFSAHAERVELCVFDANGQEHRYDLPGHSGDIWHGYLPDARPGLRYGYRVHGPWQPAEGHRFNPAKLLIDPCARQIDGEFKDNPLLHAGHNEPDYRDNAAIAPKCVVVVDHYDWEDDAPPRTPWGSTIIYEAHVKGLTYLHPEIPVEIRGTYKALGHPVMINYLKQLGITALELLPVAQFASEPRLQRMGLSNYWGYNPVAMFALHPAYACSPETALDEFRDAIKALHKAGIEVILDIVLNHSAELDLDGPLFSLRGIDNRSYYWIREDGDYHNWTGCGNTLNLSHPAVVDYASACLRYWVETCHVDGFRFDLAAVMGRTPEFRQDAPLFTAIQNCPVLSQVKLIAEPWDIAPGGYQVGNFPPLFAEWNDHFRDAARRFWLHYDLPLGAFAGRFAASSDVFKRNGRLPSAAINLVTAHDGFTLRDCVCFNHKHNEANGEENRDGTNNNYSNNHGKEGLGGSLDLVERRRDSIHALLTTLLLSQGTPMLLAGDEHGHSQHGNNNAYCQDNQLTWLDWSQASSGLTAFTAALIHLRKRIPALVENRWWEEGDGNVRWLNRYAQPLSTDEWQNGPKQLQILLSDRFLIAINATLEVTEIVLPAGEWHAIPPFAGEDNPVITAVWQGPAHGLCVFQR.

Catalysis depends on Asp-336, which acts as the Nucleophile. The active-site Proton donor is the Glu-371. Positions 458 to 467 are enriched in basic and acidic residues; the sequence is NEANGEENRD. The tract at residues 458–479 is disordered; that stretch reads NEANGEENRDGTNNNYSNNHGK.

This sequence belongs to the glycosyl hydrolase 13 family.

It catalyses the reaction Hydrolysis of (1-&gt;6)-alpha-D-glucosidic linkages to branches with degrees of polymerization of three or four glucose residues in limit dextrin.. It participates in glycan degradation; glycogen degradation. Removes maltotriose and maltotetraose chains that are attached by 1,6-alpha-linkage to the limit dextrin main chain, generating a debranched limit dextrin. The chain is Glycogen debranching enzyme from Escherichia coli (strain K12 / DH10B).